A 496-amino-acid polypeptide reads, in one-letter code: Angiopoietin-2 (496 aa).

The N-terminal stretch at 1-18 (MWQLVFLTLSCDLAVATA) is a signal peptide. 6 N-linked (GlcNAc...) asparagine glycosylation sites follow: Asn90, Asn120, Asn134, Asn152, Asn241, and Asn304. A coiled-coil region spans residues 167–249 (STNKLEKQIL…VNNSVLQKQQ (83 aa)). The region spanning 275-495 (KDEQIIFRDC…ATTMMIRPAD (221 aa)) is the Fibrinogen C-terminal domain. Cys284 and Cys313 are oxidised to a cystine. Asp429, Asp431, Cys433, and Cys435 together coordinate Ca(2+). 2 disulfides stabilise this stretch: Cys433–Cys435 and Cys437–Cys450.

In terms of assembly, interacts with TEK/TIE2, competing for the same binding site as ANGPT1. Interacts with ITGA5. Interacts with SVEP1/polydom. Interacts with THBD; this interaction significantly inhibits the generation of activated PC and TAFIa/CPB2 by the thrombin/thrombomodulin complex.

It is found in the secreted. Functionally, binds to TEK/TIE2, competing for the ANGPT1 binding site, and modulating ANGPT1 signaling. Can induce tyrosine phosphorylation of TEK/TIE2 in the absence of ANGPT1. In the absence of angiogenic inducers, such as VEGF, ANGPT2-mediated loosening of cell-matrix contacts may induce endothelial cell apoptosis with consequent vascular regression. In concert with VEGF, it may facilitate endothelial cell migration and proliferation, thus serving as a permissive angiogenic signal. Involved in the regulation of lymphangiogenesis. In Bos taurus (Bovine), this protein is Angiopoietin-2 (ANGPT2).